Here is a 244-residue protein sequence, read N- to C-terminus: 5-oxoprolinase subunit A (244 aa).

This sequence belongs to the LamB/PxpA family. In terms of assembly, forms a complex composed of PxpA, PxpB and PxpC.

It catalyses the reaction 5-oxo-L-proline + ATP + 2 H2O = L-glutamate + ADP + phosphate + H(+). Functionally, catalyzes the cleavage of 5-oxoproline to form L-glutamate coupled to the hydrolysis of ATP to ADP and inorganic phosphate. The sequence is that of 5-oxoprolinase subunit A from Shigella boydii serotype 18 (strain CDC 3083-94 / BS512).